We begin with the raw amino-acid sequence, 950 residues long: 2-oxoglutarate dehydrogenase E1 component (950 aa).

Belongs to the alpha-ketoglutarate dehydrogenase family. Homodimer. Part of the 2-oxoglutarate dehydrogenase (OGDH) complex composed of E1 (2-oxoglutarate dehydrogenase), E2 (dihydrolipoamide succinyltransferase) and E3 (dihydrolipoamide dehydrogenase); the complex contains multiple copies of the three enzymatic components (E1, E2 and E3). Thiamine diphosphate is required as a cofactor.

The enzyme catalyses N(6)-[(R)-lipoyl]-L-lysyl-[protein] + 2-oxoglutarate + H(+) = N(6)-[(R)-S(8)-succinyldihydrolipoyl]-L-lysyl-[protein] + CO2. Functionally, E1 component of the 2-oxoglutarate dehydrogenase (OGDH) complex which catalyzes the decarboxylation of 2-oxoglutarate, the first step in the conversion of 2-oxoglutarate to succinyl-CoA and CO(2). The chain is 2-oxoglutarate dehydrogenase E1 component from Geobacillus kaustophilus (strain HTA426).